Consider the following 386-residue polypeptide: Lipid-A-disaccharide synthase (386 aa).

This sequence belongs to the LpxB family.

The catalysed reaction is a lipid X + a UDP-2-N,3-O-bis[(3R)-3-hydroxyacyl]-alpha-D-glucosamine = a lipid A disaccharide + UDP + H(+). It participates in bacterial outer membrane biogenesis; LPS lipid A biosynthesis. Condensation of UDP-2,3-diacylglucosamine and 2,3-diacylglucosamine-1-phosphate to form lipid A disaccharide, a precursor of lipid A, a phosphorylated glycolipid that anchors the lipopolysaccharide to the outer membrane of the cell. This chain is Lipid-A-disaccharide synthase, found in Chromobacterium violaceum (strain ATCC 12472 / DSM 30191 / JCM 1249 / CCUG 213 / NBRC 12614 / NCIMB 9131 / NCTC 9757 / MK).